Reading from the N-terminus, the 217-residue chain is 3,4-dihydroxy-2-butanone 4-phosphate synthase (217 aa).

Residues 37 to 38, Asp42, 150 to 154, and Glu174 each bind D-ribulose 5-phosphate; these read RE and RRGHT. Residue Glu38 coordinates Mg(2+). A Mg(2+)-binding site is contributed by His153.

Belongs to the DHBP synthase family. Homodimer. The cofactor is Mg(2+). Mn(2+) serves as cofactor.

It catalyses the reaction D-ribulose 5-phosphate = (2S)-2-hydroxy-3-oxobutyl phosphate + formate + H(+). It functions in the pathway cofactor biosynthesis; riboflavin biosynthesis; 2-hydroxy-3-oxobutyl phosphate from D-ribulose 5-phosphate: step 1/1. In terms of biological role, catalyzes the conversion of D-ribulose 5-phosphate to formate and 3,4-dihydroxy-2-butanone 4-phosphate. This Shewanella putrefaciens (strain CN-32 / ATCC BAA-453) protein is 3,4-dihydroxy-2-butanone 4-phosphate synthase.